Here is a 253-residue protein sequence, read N- to C-terminus: Hydroxyacylglutathione hydrolase (253 aa).

Positions 54, 56, 58, 59, 110, 127, and 165 each coordinate Zn(2+).

This sequence belongs to the metallo-beta-lactamase superfamily. Glyoxalase II family. Monomer. The cofactor is Zn(2+).

The catalysed reaction is an S-(2-hydroxyacyl)glutathione + H2O = a 2-hydroxy carboxylate + glutathione + H(+). Its pathway is secondary metabolite metabolism; methylglyoxal degradation; (R)-lactate from methylglyoxal: step 2/2. Its function is as follows. Thiolesterase that catalyzes the hydrolysis of S-D-lactoyl-glutathione to form glutathione and D-lactic acid. The chain is Hydroxyacylglutathione hydrolase from Idiomarina loihiensis (strain ATCC BAA-735 / DSM 15497 / L2-TR).